Here is a 131-residue protein sequence, read N- to C-terminus: Translation initiation factor 5A (131 aa).

Position 36 is a hypusine (K36).

This sequence belongs to the eIF-5A family.

It localises to the cytoplasm. Functions by promoting the formation of the first peptide bond. This is Translation initiation factor 5A from Saccharolobus solfataricus (strain ATCC 35092 / DSM 1617 / JCM 11322 / P2) (Sulfolobus solfataricus).